The following is a 231-amino-acid chain: Cilia- and flagella-associated protein 299 (231 aa).

The protein resides in the cytoplasm. Its subcellular location is the nucleus. Its function is as follows. May be involved in spermatogenesis. The protein is Cilia- and flagella-associated protein 299 of Bos taurus (Bovine).